A 71-amino-acid chain; its full sequence is Disintegrin viridin (71 aa).

Residues 1–71 (AGEECDCGSP…SADCPRNRFH (71 aa)) enclose the Disintegrin domain. Disulfide bonds link Cys5–Cys20, Cys7–Cys15, Cys14–Cys37, Cys28–Cys34, Cys33–Cys58, and Cys46–Cys65. Positions 50–52 (RGD) match the Cell attachment site motif. The interval 50 to 71 (RGDNPDDRCTGQSADCPRNRFH) is disordered.

This sequence belongs to the venom metalloproteinase (M12B) family. P-II subfamily. P-IIa sub-subfamily. In terms of assembly, monomer (disintegrin). In terms of tissue distribution, expressed by the venom gland.

The protein resides in the secreted. Inhibits fibrinogen interaction with platelets. Acts by binding to alpha-IIb/beta-3 (ITGA2B/ITGB3) on the platelet surface and inhibits aggregation induced by ADP, thrombin, platelet-activating factor and collagen. This Crotalus viridis viridis (Prairie rattlesnake) protein is Disintegrin viridin.